The primary structure comprises 210 residues: Dephospho-CoA kinase (210 aa).

The 199-residue stretch at 4–202 folds into the DPCK domain; sequence WVGLTGGIGS…AFYSGIFASK (199 aa). 12–17 provides a ligand contact to ATP; it reads GSGKSA.

The protein belongs to the CoaE family.

It is found in the cytoplasm. The enzyme catalyses 3'-dephospho-CoA + ATP = ADP + CoA + H(+). Its pathway is cofactor biosynthesis; coenzyme A biosynthesis; CoA from (R)-pantothenate: step 5/5. Functionally, catalyzes the phosphorylation of the 3'-hydroxyl group of dephosphocoenzyme A to form coenzyme A. The protein is Dephospho-CoA kinase of Neisseria meningitidis serogroup A / serotype 4A (strain DSM 15465 / Z2491).